A 684-amino-acid chain; its full sequence is Translation factor GUF1 homolog, mitochondrial (684 aa).

The 189-residue stretch at 82-270 (HLIRNFSIIA…AVIERIPQPK (189 aa)) folds into the tr-type G domain. Residues 91–98 (AHVDHGKS), 163–167 (DTPGH), and 217–220 (NKID) each bind GTP.

This sequence belongs to the TRAFAC class translation factor GTPase superfamily. Classic translation factor GTPase family. LepA subfamily.

Its subcellular location is the mitochondrion inner membrane. It carries out the reaction GTP + H2O = GDP + phosphate + H(+). Promotes mitochondrial protein synthesis. May act as a fidelity factor of the translation reaction, by catalyzing a one-codon backward translocation of tRNAs on improperly translocated ribosomes. Binds to mitochondrial ribosomes in a GTP-dependent manner. In Physcomitrium patens (Spreading-leaved earth moss), this protein is Translation factor GUF1 homolog, mitochondrial.